The following is a 79-amino-acid chain: Cytochrome b (79 aa).

Helical transmembrane passes span 1–7, 31–52, and 67–79; these read TAMFLAM, WLIRNMHANGASFFFICIYLHI, and WNVGVILLLLTMM. The heme b site is built by His-37 and His-51.

The protein belongs to the cytochrome b family. The cytochrome bc1 complex contains 3 respiratory subunits (MT-CYB, CYC1 and UQCRFS1), 2 core proteins (UQCRC1 and UQCRC2) and probably 6 low-molecular weight proteins. The cofactor is heme b.

The protein resides in the mitochondrion inner membrane. In terms of biological role, component of the ubiquinol-cytochrome c reductase complex (complex III or cytochrome b-c1 complex) that is part of the mitochondrial respiratory chain. The b-c1 complex mediates electron transfer from ubiquinol to cytochrome c. Contributes to the generation of a proton gradient across the mitochondrial membrane that is then used for ATP synthesis. This is Cytochrome b (mt-cyb) from Hypsophrys nicaraguensis (Moga).